Here is a 281-residue protein sequence, read N- to C-terminus: MALYCIGDIQGCHDAFERLLHRVDFSASRDTLYILGDLVNRGPESDKVLRTCMAAGDSMRALLGNHDLHLLAAAQGVRRSSRRDTLARVLDAPDRDQLLDWLRHQPLARSHRMAHGEELLMVHAGVLPQWSSQEVMALAGEVHSVLRSKQLPDFLQAMYGNQPDRWSPDLQGWERLRVIVNALTRLRFCTAQGVMDFDSTESAEQAAPGLMPWFDVPGRATASATIAFGHWSTLGHISRPDLVALDTGCVWGGCLSMMRFGDHLADRELIQVDCPQAQAPG.

It belongs to the Ap4A hydrolase family.

The catalysed reaction is P(1),P(4)-bis(5'-adenosyl) tetraphosphate + H2O = 2 ADP + 2 H(+). In terms of biological role, hydrolyzes diadenosine 5',5'''-P1,P4-tetraphosphate to yield ADP. This chain is Bis(5'-nucleosyl)-tetraphosphatase, symmetrical, found in Delftia acidovorans (strain DSM 14801 / SPH-1).